We begin with the raw amino-acid sequence, 101 residues long: Small ribosomal subunit protein uS14 (101 aa).

This sequence belongs to the universal ribosomal protein uS14 family. Part of the 30S ribosomal subunit. Contacts proteins S3 and S10.

Binds 16S rRNA, required for the assembly of 30S particles and may also be responsible for determining the conformation of the 16S rRNA at the A site. This Rhizobium johnstonii (strain DSM 114642 / LMG 32736 / 3841) (Rhizobium leguminosarum bv. viciae) protein is Small ribosomal subunit protein uS14.